We begin with the raw amino-acid sequence, 101 residues long: MAKQALLQRELKREKLAAKFAKKYAELKATSNDAKRSDEERALARLELQKLPRNANPTRQRNRCAITGRPRGTFRQFGLARAKIRELAFAGDIPGITKASW.

The protein belongs to the universal ribosomal protein uS14 family. Part of the 30S ribosomal subunit. Contacts proteins S3 and S10.

Its function is as follows. Binds 16S rRNA, required for the assembly of 30S particles and may also be responsible for determining the conformation of the 16S rRNA at the A site. This Polaromonas sp. (strain JS666 / ATCC BAA-500) protein is Small ribosomal subunit protein uS14.